A 59-amino-acid polypeptide reads, in one-letter code: Protein translocase subunit SecE (59 aa).

A helical membrane pass occupies residues 30 to 50; that stretch reads ITVISTVIFFVIFFALLDTGI.

This sequence belongs to the SecE/SEC61-gamma family. As to quaternary structure, component of the Sec protein translocase complex. Heterotrimer consisting of SecY, SecE and SecG subunits. The heterotrimers can form oligomers, although 1 heterotrimer is thought to be able to translocate proteins. Interacts with the ribosome. Interacts with SecDF, and other proteins may be involved. Interacts with SecA.

It localises to the cell membrane. Functionally, essential subunit of the Sec protein translocation channel SecYEG. Clamps together the 2 halves of SecY. May contact the channel plug during translocation. The chain is Protein translocase subunit SecE from Bacillus subtilis (strain 168).